Here is a 662-residue protein sequence, read N- to C-terminus: MEARVAWGALAGPLRVLCVLCCLLGRAIAAPSPIIKFPGDVAPKTDKELAVQYLNTFYGCPKESCNLFVLKDTLKKMQKFFGLPQTGDLDQNTIETMRKPRCGNPDVANYNFFPRKPKWDKNQITYRIIGYTPDLDPETVDDAFARALKVWSDVTPLRFSRIHDGEADIMINFGRWEHGDGYPFDGKDGLLAHAFAPGTGVGGDSHFDDDELWTLGEGQVVRVKYGNADGEYCKFPFLFNGREYSSCTDTGRSDGFLWCSTTYNFEKDGKYGFCPHEALFTMGGNADGQPCKFPFRFQGTSYNSCTTEGRTDGYRWCGTTEDYDRDKKYGFCPETAMSTVGGNSEGAPCVFPFTFLGNKYESCTSAGRNDGKVWCATTTNYDDDRKWGFCPDQGYSLFLVAAHEFGHAMGLEHSQDPGALMAPIYTYTKNFRLSHDDIKGIQELYGPSPDADTDTGTGPTPTLGPVTPEICKQDIVFDGIAQIRGEIFFFKDRFIWRTVTPRDKPTGPLLVATFWPELPEKIDAVYEAPQEEKAVFFAGNEYWVYSASTLERGYPKPLTSLGLPPDVQQVDAAFNWSKNKKTYIFAGDKFWRYNEVKKKMDPGFPKLIADSWNAIPDNLDAVVDLQGGGHSYFFKGAYYLKLENQSLKSVKFGSIKSDWLGC.

Residues 1-29 (MEARVAWGALAGPLRVLCVLCCLLGRAIA) form the signal peptide. Positions 30 to 109 (APSPIIKFPG…PRCGNPDVAN (80 aa)) are cleaved as a propeptide — activation peptide. The Cysteine switch signature appears at 100-107 (PRCGNPDV). Zn(2+) is bound at residue Cys102. The collagenase-like 1 stretch occupies residues 110–221 (YNFFPRKPKW…LWTLGEGQVV (112 aa)). Residues Asp134 and Asp168 each coordinate Ca(2+). Zn(2+)-binding residues include His178 and Asp180. Ca(2+) is bound by residues Asp185 and Gly186. His193 serves as a coordination point for Zn(2+). Positions 200, 202, and 204 each coordinate Ca(2+). A Zn(2+)-binding site is contributed by His206. Residues Asp208, Asp209, and Glu211 each coordinate Ca(2+). The interval 222-396 (RVKYGNADGE…WGFCPDQGYS (175 aa)) is collagen-binding. Fibronectin type-II domains follow at residues 228 to 276 (ADGE…FCPH), 286 to 334 (ADGQ…FCPE), and 344 to 392 (SEGA…FCPD). 6 disulfide bridges follow: Cys233–Cys259, Cys247–Cys274, Cys291–Cys317, Cys305–Cys332, Cys349–Cys375, and Cys363–Cys390. The interval 397–467 (LFLVAAHEFG…GPTPTLGPVT (71 aa)) is collagenase-like 2. His403 serves as a coordination point for Zn(2+). Residue Glu404 is part of the active site. His407 and His413 together coordinate Zn(2+). The segment at 414 to 662 (SQDPGALMAP…GSIKSDWLGC (249 aa)) is required for inhibitor TIMP2 binding. The tract at residues 446–465 (GPSPDADTDTGTGPTPTLGP) is disordered. Cysteines 471 and 662 form a disulfide. Hemopexin repeat units lie at residues 474–518 (DIVF…WPEL), 519–565 (PEKI…GLPP), 567–615 (VQQV…WNAI), and 616–662 (PDNL…WLGC). Ca(2+) is bound by residues Asp478, Asp523, and Asp571. Asn575 is a glycosylation site (N-linked (GlcNAc...) asparagine). Residue Asp620 participates in Ca(2+) binding. Asn644 carries an N-linked (GlcNAc...) asparagine glycan.

The protein belongs to the peptidase M10A family. As to quaternary structure, interacts (via the C-terminal hemopexin-like domains-containing region) with the integrin alpha-V/beta-3; the interaction promotes vascular invasion in angiogenic vessels and melamoma cells. Interacts (via the C-terminal PEX domain) with TIMP2 (via the C-terminal); the interaction inhibits the degradation activity. Interacts with GSK3B. Ca(2+) serves as cofactor. Zn(2+) is required as a cofactor. In terms of processing, phosphorylation on multiple sites modulates enzymatic activity. Phosphorylated by PKC in vitro. The propeptide is processed by MMP14 (MT-MMP1) and MMP16 (MT-MMP3). Autocatalytic cleavage in the C-terminal produces the anti-angiogenic peptide, PEX. This processing appears to be facilitated by binding integrinv/beta3.

The protein localises to the secreted. It is found in the extracellular space. It localises to the extracellular matrix. Its subcellular location is the membrane. The protein resides in the nucleus. The protein localises to the cytoplasm. It is found in the mitochondrion. The enzyme catalyses Cleavage of gelatin type I and collagen types IV, V, VII, X. Cleaves the collagen-like sequence Pro-Gln-Gly-|-Ile-Ala-Gly-Gln.. Ubiquitinous metalloproteinase that is involved in diverse functions such as remodeling of the vasculature, angiogenesis, tissue repair, tumor invasion, inflammation, and atherosclerotic plaque rupture. As well as degrading extracellular matrix proteins, can also act on several nonmatrix proteins such as big endothelial 1 and beta-type CGRP promoting vasoconstriction. Also cleaves KISS at a Gly-|-Leu bond. Appears to have a role in myocardial cell death pathways. Contributes to myocardial oxidative stress by regulating the activity of GSK3beta. Cleaves GSK3beta in vitro. Involved in the formation of the fibrovascular tissues. In terms of biological role, PEX, the C-terminal non-catalytic fragment of MMP2, possesses anti-angiogenic and anti-tumor properties and inhibits cell migration and cell adhesion to FGF2 and vitronectin. Ligand for integrin alpha-v/beta-3 on the surface of blood vessels. Functionally, mediates the proteolysis of CHUK/IKKA and initiates a primary innate immune response by inducing mitochondrial-nuclear stress signaling with activation of the pro-inflammatory NF-kappaB, NFAT and IRF transcriptional pathways. The polypeptide is 72 kDa type IV collagenase (Mmp2) (Mus musculus (Mouse)).